Consider the following 246-residue polypeptide: Adenosylcobinamide-GDP ribazoletransferase (246 aa).

6 helical membrane passes run 34-54 (IVTF…VALL), 59-79 (CGVP…TGGF), 113-133 (GGLA…ELLL), 136-156 (IHPI…AALL), 181-201 (TLVT…LQGL), and 203-223 (AALI…RTLG).

The protein belongs to the CobS family. It depends on Mg(2+) as a cofactor.

The protein localises to the cell inner membrane. The enzyme catalyses alpha-ribazole + adenosylcob(III)inamide-GDP = adenosylcob(III)alamin + GMP + H(+). It catalyses the reaction alpha-ribazole 5'-phosphate + adenosylcob(III)inamide-GDP = adenosylcob(III)alamin 5'-phosphate + GMP + H(+). It functions in the pathway cofactor biosynthesis; adenosylcobalamin biosynthesis; adenosylcobalamin from cob(II)yrinate a,c-diamide: step 7/7. In terms of biological role, joins adenosylcobinamide-GDP and alpha-ribazole to generate adenosylcobalamin (Ado-cobalamin). Also synthesizes adenosylcobalamin 5'-phosphate from adenosylcobinamide-GDP and alpha-ribazole 5'-phosphate. This chain is Adenosylcobinamide-GDP ribazoletransferase, found in Klebsiella pneumoniae subsp. pneumoniae (strain ATCC 700721 / MGH 78578).